A 457-amino-acid chain; its full sequence is Vasoactive intestinal polypeptide receptor 1 (457 aa).

An N-terminal signal peptide occupies residues 1-30; sequence MRPPSPLPARWLCVLAGALAWALGPAGGQA. Over 31-141 the chain is Extracellular; it reads ARLQEECDYV…DEQQTMFYGS (111 aa). Disulfide bonds link Cys37/Cys208, Cys50/Cys72, Cys63/Cys105, Cys86/Cys122, and Cys215/Cys285. N-linked (GlcNAc...) asparagine glycosylation is found at Asn58, Asn69, and Asn100. A helical membrane pass occupies residues 142–166; sequence VKTGYTIGYGLSLATLLVATAILSL. Residues 167-174 are Cytoplasmic-facing; the sequence is FRKLHCTR. Residues 175 to 196 traverse the membrane as a helical segment; the sequence is NYIHMHLFISFILRAAAVFIKD. Residues 197-216 are Extracellular-facing; the sequence is LALFDSGESDQCSEGSVGCK. A helical transmembrane segment spans residues 217-241; the sequence is AAMVFFQYCVMANFFWLLVEGLYLY. Residues 242–254 are Cytoplasmic-facing; it reads TLLAVSFFSERKY. Residues 255 to 276 form a helical membrane-spanning segment; it reads FWGYILIGWGVPSTFTMVWTIA. At 277–291 the chain is on the extracellular side; sequence RIHFEDYGCWDTINS. A glycan (N-linked (GlcNAc...) asparagine) is linked at Asn290. The chain crosses the membrane as a helical span at residues 292–316; that stretch reads SLWWIIKGPILTSILVNFILFICII. At 317 to 338 the chain is on the cytoplasmic side; it reads RILLQKLRPPDIRKSDSSPYSR. A helical transmembrane segment spans residues 339–359; the sequence is LARSTLLLIPLFGVHYIMFAF. Residues 360-367 lie on the Extracellular side of the membrane; it reads FPDNFKPE. The helical transmembrane segment at 368–391 threads the bilayer; the sequence is VKMVFELVVGSFQGFVVAILYCFL. Residues 392-457 are Cytoplasmic-facing; sequence NGEVQAELRR…SSFQAEVSLV (66 aa).

It belongs to the G-protein coupled receptor 2 family. In terms of assembly, interacts with ADCYAP1/PACAP; activated by both PACAP27 and PACAP38 neuropeptides. Interacts with VIP; the interaction results in VIPR1 activation. In lung, HT-29 colonic epithelial cells, Raji B-lymphoblasts. Lesser extent in brain, heart, kidney, liver and placenta. Not expressed in CD4+ or CD8+ T-cells. Expressed in the T-cell lines HARRIS, HuT 78, Jurkat and SUP-T1, but not in the T-cell lines Peer, MOLT-4, HSB and YT.

The protein resides in the cell membrane. G protein-coupled receptor activated by the neuropeptides vasoactive intestinal peptide (VIP) and pituitary adenylate cyclase-activating polypeptide (ADCYAP1/PACAP). Binds VIP and both PACAP27 and PACAP38 bioactive peptides with the following order of ligand affinity VIP = PACAP27 &gt; PACAP38. Ligand binding causes a conformation change that triggers signaling via guanine nucleotide-binding proteins (G proteins) and modulates the activity of downstream effectors. Activates cAMP-dependent pathway. The polypeptide is Vasoactive intestinal polypeptide receptor 1 (Homo sapiens (Human)).